Here is a 93-residue protein sequence, read N- to C-terminus: MPRSLKKGPFVDDHLLKKVDALNESGKKTVIKTWSRRSTIIPDMLGHTFAVHDGRKHIPVFVNESMVGHKLGEFAPTRTFKGHVKDDRKSRRR.

The protein belongs to the universal ribosomal protein uS19 family.

Protein S19 forms a complex with S13 that binds strongly to the 16S ribosomal RNA. In Saccharopolyspora erythraea (strain ATCC 11635 / DSM 40517 / JCM 4748 / NBRC 13426 / NCIMB 8594 / NRRL 2338), this protein is Small ribosomal subunit protein uS19.